Consider the following 395-residue polypeptide: Putative nickel insertion protein (395 aa).

It belongs to the LarC family.

This is Putative nickel insertion protein from Methanopyrus kandleri (strain AV19 / DSM 6324 / JCM 9639 / NBRC 100938).